Consider the following 501-residue polypeptide: Lysine--tRNA ligase (501 aa).

Mg(2+)-binding residues include Glu402 and Glu409.

This sequence belongs to the class-II aminoacyl-tRNA synthetase family. As to quaternary structure, homodimer. Mg(2+) is required as a cofactor.

Its subcellular location is the cytoplasm. It carries out the reaction tRNA(Lys) + L-lysine + ATP = L-lysyl-tRNA(Lys) + AMP + diphosphate. The sequence is that of Lysine--tRNA ligase from Helicobacter pylori (strain HPAG1).